Here is a 395-residue protein sequence, read N- to C-terminus: Flap endonuclease 1 (395 aa).

The segment at methionine 1–alanine 108 is N-domain. Aspartate 34 is a Mg(2+) binding site. Arginine 74 serves as a coordination point for DNA. Mg(2+)-binding residues include aspartate 90, glutamate 162, glutamate 164, aspartate 183, and aspartate 185. An I-domain region spans residues methionine 126–tyrosine 257. DNA is bound at residue glutamate 162. Residues glycine 235 and aspartate 237 each contribute to the DNA site. Position 237 (aspartate 237) interacts with Mg(2+). Residues threonine 340–phenylalanine 348 form an interaction with PCNA region.

This sequence belongs to the XPG/RAD2 endonuclease family. FEN1 subfamily. In terms of assembly, interacts with PCNA. Three molecules of FEN1 bind to one PCNA trimer with each molecule binding to one PCNA monomer. PCNA stimulates the nuclease activity without altering cleavage specificity. Mg(2+) is required as a cofactor. In terms of processing, phosphorylated. Phosphorylation upon DNA damage induces relocalization to the nuclear plasma.

It is found in the nucleus. The protein localises to the nucleolus. It localises to the nucleoplasm. Its subcellular location is the mitochondrion. Structure-specific nuclease with 5'-flap endonuclease and 5'-3' exonuclease activities involved in DNA replication and repair. During DNA replication, cleaves the 5'-overhanging flap structure that is generated by displacement synthesis when DNA polymerase encounters the 5'-end of a downstream Okazaki fragment. It enters the flap from the 5'-end and then tracks to cleave the flap base, leaving a nick for ligation. Also involved in the long patch base excision repair (LP-BER) pathway, by cleaving within the apurinic/apyrimidinic (AP) site-terminated flap. Acts as a genome stabilization factor that prevents flaps from equilibrating into structures that lead to duplications and deletions. Also possesses 5'-3' exonuclease activity on nicked or gapped double-stranded DNA, and exhibits RNase H activity. Also involved in replication and repair of rDNA and in repairing mitochondrial DNA. The chain is Flap endonuclease 1 from Leishmania braziliensis.